We begin with the raw amino-acid sequence, 94 residues long: Large ribosomal subunit protein uL23 (94 aa).

Belongs to the universal ribosomal protein uL23 family. As to quaternary structure, part of the 50S ribosomal subunit. Contacts protein L29, and trigger factor when it is bound to the ribosome.

Its function is as follows. One of the early assembly proteins it binds 23S rRNA. One of the proteins that surrounds the polypeptide exit tunnel on the outside of the ribosome. Forms the main docking site for trigger factor binding to the ribosome. The polypeptide is Large ribosomal subunit protein uL23 (Geobacter sulfurreducens (strain ATCC 51573 / DSM 12127 / PCA)).